The sequence spans 288 residues: T-lymphocyte activation antigen CD80 (288 aa).

The N-terminal stretch at 1 to 34 (MGHTRRQGTSPSKCPYLNFFQLLVLAGLSHFCSG) is a signal peptide. One can recognise an Ig-like V-type domain in the interval 35–135 (VIHVTKEVKE…FKREHLAEVT (101 aa)). The Extracellular portion of the chain corresponds to 35–242 (VIHVTKEVKE…TTKQEHFPDN (208 aa)). Intrachain disulfides connect cysteine 50–cysteine 116 and cysteine 162–cysteine 216. N-linked (GlcNAc...) asparagine glycosylation is found at asparagine 53, asparagine 89, asparagine 98, asparagine 186, asparagine 207, asparagine 211, asparagine 226, and asparagine 232. Positions 145 to 230 (PSISDFEIPT…GHLRVNQTFN (86 aa)) constitute an Ig-like C2-type domain. A helical transmembrane segment spans residues 243 to 263 (LLPSWAITLISVNGIFVICCL). 4 S-palmitoyl cysteine lipidation sites follow: cysteine 261, cysteine 262, cysteine 266, and cysteine 271. Over 264 to 288 (TYCFAPRCRERRRNERLRRESVRPV) the chain is Cytoplasmic. The residue at position 284 (serine 284) is a Phosphoserine.

Homodimer. Interacts with CTLA4; this interaction inhibits T-cell activation. Interacts with PDL1/CD274; this interaction blocks PDL1/PDCD1 binding and thus PDL1/CD274 inhibitory function. Interacts with CD28. In terms of assembly, (Microbial infection) Interacts with adenovirus subgroup B fiber proteins. As to quaternary structure, (Microbial infection) Interacts with Orthopoxvirus OPG038/M2 protein, inhibiting the interaction with CTLA4/CD152. In terms of processing, palmitoylated by ZDHHC20; palmitoylation protects CD80 from ubiquitin-mediated degradation, regulating the protein stability, and ensures its accurate plasma membrane localization. Expressed on activated B-cells, macrophages and dendritic cells.

The protein resides in the cell membrane. Costimulatory molecule that belongs to the immunoglobulin superfamily that plays an important role in T-lymphocyte activation. Acts as the primary auxiliary signal augmenting the MHC/TCR signal in naive T-cells together with the CD28 receptor which is constitutively expressed on the cell surface of T-cells. In turn, activates different signaling pathways such as NF-kappa-B or MAPK leading to the production of different cytokines. In addition, CD28/CD80 costimulatory signal stimulates glucose metabolism and ATP synthesis of T-cells by activating the PI3K/Akt signaling pathway. Also acts as a regulator of PDL1/PDCD1 interactions to limit excess engagement of PDL1 and its inhibitory role in immune responses. Expressed on B-cells, plays a critical role in regulating interactions between B-cells and T-cells in both early and late germinal center responses, which are crucial for the generation of effective humoral immune responses. Functionally, (Microbial infection) Acts as a receptor for adenovirus subgroup B. The polypeptide is T-lymphocyte activation antigen CD80 (CD80) (Homo sapiens (Human)).